We begin with the raw amino-acid sequence, 129 residues long: Small ribosomal subunit protein eS6 (129 aa).

This sequence belongs to the eukaryotic ribosomal protein eS6 family.

The chain is Small ribosomal subunit protein eS6 from Methanocorpusculum labreanum (strain ATCC 43576 / DSM 4855 / Z).